We begin with the raw amino-acid sequence, 110 residues long: Spermatid nuclear transition protein 3 (110 aa).

Positions arginine 80 to arginine 110 are disordered.

The protein localises to the nucleus. The protein resides in the chromosome. Involved in nuclear basic protein transition: histones are replaced by spermatid specific proteins which are themselves replaced by protamines in late spermatids. The chain is Spermatid nuclear transition protein 3 from Ovis aries (Sheep).